Here is a 412-residue protein sequence, read N- to C-terminus: L-cysteine:1D-myo-inositol 2-amino-2-deoxy-alpha-D-glucopyranoside ligase (412 aa).

Residue C43 coordinates Zn(2+). Residues 43–46 (CGIT), T58, and 81–83 (NVT) each bind L-cysteinyl-5'-AMP. Residues 45–55 (ITPYDATHLGH) carry the 'HIGH' region motif. A 'ERGGDP' region motif is present at residues 187-192 (ERGGDP). W227 serves as a coordination point for L-cysteinyl-5'-AMP. C231 contributes to the Zn(2+) binding site. 249–251 (GSD) contributes to the L-cysteinyl-5'-AMP binding site. A Zn(2+)-binding site is contributed by H256. I283 contacts L-cysteinyl-5'-AMP. The 'KMSKS' region motif lies at 289-293 (KMSKS).

The protein belongs to the class-I aminoacyl-tRNA synthetase family. MshC subfamily. Monomer. Zn(2+) serves as cofactor.

It catalyses the reaction 1D-myo-inositol 2-amino-2-deoxy-alpha-D-glucopyranoside + L-cysteine + ATP = 1D-myo-inositol 2-(L-cysteinylamino)-2-deoxy-alpha-D-glucopyranoside + AMP + diphosphate + H(+). Catalyzes the ATP-dependent condensation of GlcN-Ins and L-cysteine to form L-Cys-GlcN-Ins. The sequence is that of L-cysteine:1D-myo-inositol 2-amino-2-deoxy-alpha-D-glucopyranoside ligase from Saccharopolyspora erythraea (strain ATCC 11635 / DSM 40517 / JCM 4748 / NBRC 13426 / NCIMB 8594 / NRRL 2338).